The chain runs to 355 residues: Sesquiterpene synthase-like protein Agr11 (355 aa).

This sequence belongs to the terpene synthase family.

The polypeptide is Sesquiterpene synthase-like protein Agr11 (Cyclocybe aegerita (Black poplar mushroom)).